A 977-amino-acid chain; its full sequence is Pro-apoptotic serine protease NMA111 (977 aa).

The interval 1–36 is disordered; the sequence is MTIQAHKRTLSEVSTSSVGQLKRREGYTEDYTDEGS. Positions 64–254 are serine protease; sequence VVSVHFAQVA…LPLDRILRAL (191 aa). Active-site charge relay system residues include histidine 102, aspartate 133, and serine 216. PDZ domains lie at 271 to 356 and 749 to 835; these read QWLL…LVVQ and SVLQ…VRKG.

This sequence belongs to the peptidase S1C family.

The protein resides in the nucleus. Nuclear serine protease which mediates apoptosis. The protein is Pro-apoptotic serine protease NMA111 (NMA111) of Eremothecium gossypii (strain ATCC 10895 / CBS 109.51 / FGSC 9923 / NRRL Y-1056) (Yeast).